The sequence spans 310 residues: Acetyl-coenzyme A carboxylase carboxyl transferase subunit beta, chloroplastic (310 aa).

Residues 47-310 (LWARCDNCGN…LYLSVPYNKN (264 aa)) enclose the CoA carboxyltransferase N-terminal domain. Residues cysteine 51, cysteine 54, cysteine 70, and cysteine 73 each coordinate Zn(2+). The segment at 51–73 (CDNCGNMLYVKFLKQNRSVCEEC) adopts a C4-type zinc-finger fold.

It belongs to the AccD/PCCB family. Acetyl-CoA carboxylase is a heterohexamer composed of biotin carboxyl carrier protein, biotin carboxylase and 2 subunits each of ACCase subunit alpha and ACCase plastid-coded subunit beta (accD). It depends on Zn(2+) as a cofactor.

The protein resides in the plastid. It localises to the chloroplast stroma. It catalyses the reaction N(6)-carboxybiotinyl-L-lysyl-[protein] + acetyl-CoA = N(6)-biotinyl-L-lysyl-[protein] + malonyl-CoA. It functions in the pathway lipid metabolism; malonyl-CoA biosynthesis; malonyl-CoA from acetyl-CoA: step 1/1. Its function is as follows. Component of the acetyl coenzyme A carboxylase (ACC) complex. Biotin carboxylase (BC) catalyzes the carboxylation of biotin on its carrier protein (BCCP) and then the CO(2) group is transferred by the transcarboxylase to acetyl-CoA to form malonyl-CoA. The polypeptide is Acetyl-coenzyme A carboxylase carboxyl transferase subunit beta, chloroplastic (Adiantum capillus-veneris (Maidenhair fern)).